A 201-amino-acid polypeptide reads, in one-letter code: Holliday junction branch migration complex subunit RuvA (201 aa).

The tract at residues 1-64 (MIGRLRGELV…EDAHVLYGFA (64 aa)) is domain I. Positions 65–143 (SESERALFRS…SLPAAVTLTG (79 aa)) are domain II. The segment at 144–153 (GKPAAAAARA) is flexible linker. The tract at residues 153-201 (APDPVSDAVSALVSLGYKPQEASRLISAVEGEAERSEDLIRLALKATLK) is domain III.

It belongs to the RuvA family. Homotetramer. Forms an RuvA(8)-RuvB(12)-Holliday junction (HJ) complex. HJ DNA is sandwiched between 2 RuvA tetramers; dsDNA enters through RuvA and exits via RuvB. An RuvB hexamer assembles on each DNA strand where it exits the tetramer. Each RuvB hexamer is contacted by two RuvA subunits (via domain III) on 2 adjacent RuvB subunits; this complex drives branch migration. In the full resolvosome a probable DNA-RuvA(4)-RuvB(12)-RuvC(2) complex forms which resolves the HJ.

The protein resides in the cytoplasm. Functionally, the RuvA-RuvB-RuvC complex processes Holliday junction (HJ) DNA during genetic recombination and DNA repair, while the RuvA-RuvB complex plays an important role in the rescue of blocked DNA replication forks via replication fork reversal (RFR). RuvA specifically binds to HJ cruciform DNA, conferring on it an open structure. The RuvB hexamer acts as an ATP-dependent pump, pulling dsDNA into and through the RuvAB complex. HJ branch migration allows RuvC to scan DNA until it finds its consensus sequence, where it cleaves and resolves the cruciform DNA. This is Holliday junction branch migration complex subunit RuvA from Thioalkalivibrio sulfidiphilus (strain HL-EbGR7).